Reading from the N-terminus, the 254-residue chain is MEAKPRVKVVLLDIEGTVCPISFVKDVLFPYALAALPETLSTEWDSSSFLPYRSAFPPEHSSTPEALLSHVRDLMAQDLKIPYLKSLQGYLWLRGYESGTLKCPLFPDVYPAMKKWKENGAKICIYSSGSVAAQKLLWRYTAEGDLRGCIWNGVDGAEEIEGGYWDTVNAGLKQESTSYEKIAKANRALGEVGEWLFLSDNVKEVRAAKESGMKSFVVVREGNADVSVEEKNRQVLITSFREVEAMVEVTGESA.

Asp-13 and Glu-15 together coordinate Mg(2+). Substrate is bound by residues 127 to 128 and Lys-173; that span reads SS. Mg(2+) is bound at residue Asp-200.

The protein belongs to the HAD-like hydrolase superfamily. MasA/MtnC family. As to quaternary structure, monomer. The cofactor is Mg(2+).

It localises to the cytoplasm. Its subcellular location is the nucleus. The enzyme catalyses 5-methylsulfanyl-2,3-dioxopentyl phosphate + H2O = 1,2-dihydroxy-5-(methylsulfanyl)pent-1-en-3-one + phosphate. It functions in the pathway amino-acid biosynthesis; L-methionine biosynthesis via salvage pathway; L-methionine from S-methyl-5-thio-alpha-D-ribose 1-phosphate: step 3/6. It participates in amino-acid biosynthesis; L-methionine biosynthesis via salvage pathway; L-methionine from S-methyl-5-thio-alpha-D-ribose 1-phosphate: step 4/6. Bifunctional enzyme that catalyzes the enolization of 2,3-diketo-5-methylthiopentyl-1-phosphate (DK-MTP-1-P) into the intermediate 2-hydroxy-3-keto-5-methylthiopentenyl-1-phosphate (HK-MTPenyl-1-P), which is then dephosphorylated to form the acireductone 1,2-dihydroxy-3-keto-5-methylthiopentene (DHK-MTPene). The chain is Enolase-phosphatase E1 (utr4) from Sclerotinia sclerotiorum (strain ATCC 18683 / 1980 / Ss-1) (White mold).